The sequence spans 410 residues: Mating-type locus allele B4 protein (410 aa).

Residues 1–110 (MSSDPKISIT…ANASSPVVGC (110 aa)) form a variable domain between B alleles region. Positions 107 to 184 (VVGCRELSED…NARRRSGWSH (78 aa)) form a DNA-binding region, homeobox; TALE-type. Positions 111 to 410 (RELSEDLPAY…PFLCLSVAFV (300 aa)) are highly conserved between B alleles. Disordered stretches follow at residues 202 to 241 (RAKL…TPAD), 278 to 335 (TPKP…TPEL), and 375 to 394 (RGNR…QPDE). Residues 206 to 222 (SSSNQSTPPSPTSEYPS) are compositionally biased toward low complexity. A Nuclear localization signal motif is present at residues 276 to 308 (KKTPKPGMPRPVTTVAKRQPARKTKPAAKPKSR). Residues 294–307 (QPARKTKPAAKPKS) show a composition bias toward basic residues. Positions 312–335 (PRASTTPSIDSTLDSSKLESTPEL) are enriched in polar residues. The not essential for B4 function stretch occupies residues 333 to 410 (PELSMCSTAD…PFLCLSVAFV (78 aa)). Over residues 375–388 (RGNRKVKALPKRAG) the composition is skewed to basic residues.

The protein belongs to the TALE/M-ATYP homeobox family.

It is found in the nucleus. The B locus has at least 25 alleles, and any combination of two different B alleles yields a multimeric regulatory protein, that activates genes responsible for the pathogenicity and for the sexual development of the fungus within the corn plant. This Mycosarcoma maydis (Corn smut fungus) protein is Mating-type locus allele B4 protein.